The following is a 406-amino-acid chain: Putative phosphate permease PH0640 (406 aa).

11 helical membrane passes run Ile2 to Ile22, Ala45 to Thr65, Val83 to Thr103, Ser114 to Trp134, Val140 to Arg160, Phe182 to Gly202, Ile207 to Leu227, Val265 to Gly285, Val288 to Thr308, Phe330 to Ile350, and Phe385 to Ile405.

Belongs to the inorganic phosphate transporter (PiT) (TC 2.A.20) family.

It is found in the cell membrane. Its function is as follows. Potential transporter for phosphate. In Pyrococcus horikoshii (strain ATCC 700860 / DSM 12428 / JCM 9974 / NBRC 100139 / OT-3), this protein is Putative phosphate permease PH0640.